Here is a 319-residue protein sequence, read N- to C-terminus: Cytochrome c biogenesis protein CcsA (319 aa).

7 helical membrane-spanning segments follow: residues 17–37 (TISI…LGGL), 44–64 (GMIV…ASSG), 68–88 (LSNL…LHTI), 143–163 (MLLS…ILII), 223–243 (VISL…VWAN), 257–271 (TWAF…IYLH), and 286–306 (VASI…LLGI).

It belongs to the CcmF/CycK/Ccl1/NrfE/CcsA family. May interact with Ccs1.

The protein localises to the plastid. It localises to the chloroplast thylakoid membrane. In terms of biological role, required during biogenesis of c-type cytochromes (cytochrome c6 and cytochrome f) at the step of heme attachment. The polypeptide is Cytochrome c biogenesis protein CcsA (Lolium perenne (Perennial ryegrass)).